Reading from the N-terminus, the 331-residue chain is Phosphoribosylformylglycinamidine cyclo-ligase (331 aa).

The protein belongs to the AIR synthase family.

The protein resides in the cytoplasm. The catalysed reaction is 2-formamido-N(1)-(5-O-phospho-beta-D-ribosyl)acetamidine + ATP = 5-amino-1-(5-phospho-beta-D-ribosyl)imidazole + ADP + phosphate + H(+). The protein operates within purine metabolism; IMP biosynthesis via de novo pathway; 5-amino-1-(5-phospho-D-ribosyl)imidazole from N(2)-formyl-N(1)-(5-phospho-D-ribosyl)glycinamide: step 2/2. The polypeptide is Phosphoribosylformylglycinamidine cyclo-ligase (Clostridium botulinum (strain 657 / Type Ba4)).